A 342-amino-acid polypeptide reads, in one-letter code: Probable tyrosine--tRNA ligase, cytoplasmic (342 aa).

Y48 is an L-tyrosine binding site. The 'HIGH' region motif lies at 53 to 61; that stretch reads ITGKPHIGY. Y175, Q179, D182, and Q197 together coordinate L-tyrosine. The 'KMSKS' region signature appears at 231 to 235; that stretch reads KMSSS.

Belongs to the class-I aminoacyl-tRNA synthetase family. Homodimer.

The protein resides in the cytoplasm. The enzyme catalyses tRNA(Tyr) + L-tyrosine + ATP = L-tyrosyl-tRNA(Tyr) + AMP + diphosphate + H(+). The chain is Probable tyrosine--tRNA ligase, cytoplasmic from Enterocytozoon bieneusi (strain H348) (Microsporidian parasite).